The sequence spans 354 residues: Alkanal monooxygenase alpha chain (354 aa).

It belongs to the bacterial luciferase oxidoreductase family. Heterodimer of an alpha and a beta chain.

The catalysed reaction is a long-chain fatty aldehyde + FMNH2 + O2 = a long-chain fatty acid + hnu + FMN + H2O + 2 H(+). Light-emitting reaction in luminous bacteria. The chain is Alkanal monooxygenase alpha chain (luxA) from Aliivibrio fischeri (Vibrio fischeri).